The following is a 217-amino-acid chain: 3-demethoxyubiquinol 3-hydroxylase (217 aa).

Fe cation-binding residues include Glu66, Glu96, His99, Glu148, Glu180, and His183.

It belongs to the COQ7 family. Requires Fe cation as cofactor.

The protein localises to the cell membrane. It catalyses the reaction a 5-methoxy-2-methyl-3-(all-trans-polyprenyl)benzene-1,4-diol + AH2 + O2 = a 3-demethylubiquinol + A + H2O. Its pathway is cofactor biosynthesis; ubiquinone biosynthesis. In terms of biological role, catalyzes the hydroxylation of 2-nonaprenyl-3-methyl-6-methoxy-1,4-benzoquinol during ubiquinone biosynthesis. This is 3-demethoxyubiquinol 3-hydroxylase from Xanthomonas axonopodis pv. citri (strain 306).